We begin with the raw amino-acid sequence, 307 residues long: Ornithine carbamoyltransferase (307 aa).

Carbamoyl phosphate-binding positions include 50-53, Q77, R101, and 128-131; these read STRT and HPCQ. L-ornithine contacts are provided by residues N160, D224, and 228-229; that span reads SM. Carbamoyl phosphate is bound by residues 264–265 and R292; that span reads CL.

The protein belongs to the aspartate/ornithine carbamoyltransferase superfamily. OTCase family.

It is found in the cytoplasm. The enzyme catalyses carbamoyl phosphate + L-ornithine = L-citrulline + phosphate + H(+). It participates in amino-acid biosynthesis; L-arginine biosynthesis; L-arginine from L-ornithine and carbamoyl phosphate: step 1/3. Reversibly catalyzes the transfer of the carbamoyl group from carbamoyl phosphate (CP) to the N(epsilon) atom of ornithine (ORN) to produce L-citrulline. The protein is Ornithine carbamoyltransferase of Clavibacter michiganensis subsp. michiganensis (strain NCPPB 382).